The chain runs to 180 residues: Putative pre-16S rRNA nuclease (180 aa).

A compositionally biased stretch (basic and acidic residues) spans 1 to 12 (MDAQERSERPDP). Residues 1–23 (MDAQERSERPDPATDPGRGRRLG) form a disordered region.

It belongs to the YqgF nuclease family.

It localises to the cytoplasm. Could be a nuclease involved in processing of the 5'-end of pre-16S rRNA. This Nocardia farcinica (strain IFM 10152) protein is Putative pre-16S rRNA nuclease.